A 196-amino-acid chain; its full sequence is 7-methyl-GTP pyrophosphatase (196 aa).

Aspartate 72 (proton acceptor) is an active-site residue.

Belongs to the Maf family. YceF subfamily. The cofactor is a divalent metal cation.

The protein localises to the cytoplasm. The catalysed reaction is N(7)-methyl-GTP + H2O = N(7)-methyl-GMP + diphosphate + H(+). In terms of biological role, nucleoside triphosphate pyrophosphatase that hydrolyzes 7-methyl-GTP (m(7)GTP). May have a dual role in cell division arrest and in preventing the incorporation of modified nucleotides into cellular nucleic acids. This Neisseria gonorrhoeae (strain ATCC 700825 / FA 1090) protein is 7-methyl-GTP pyrophosphatase.